Reading from the N-terminus, the 422-residue chain is Serine--tRNA ligase (422 aa).

229–231 is an L-serine binding site; it reads TAE. 260–262 contacts ATP; sequence RRE. Glu283 serves as a coordination point for L-serine. 347-350 lines the ATP pocket; the sequence is EISS. Ser383 is an L-serine binding site.

The protein belongs to the class-II aminoacyl-tRNA synthetase family. Type-1 seryl-tRNA synthetase subfamily. As to quaternary structure, homodimer. The tRNA molecule binds across the dimer.

The protein localises to the cytoplasm. It catalyses the reaction tRNA(Ser) + L-serine + ATP = L-seryl-tRNA(Ser) + AMP + diphosphate + H(+). The enzyme catalyses tRNA(Sec) + L-serine + ATP = L-seryl-tRNA(Sec) + AMP + diphosphate + H(+). It functions in the pathway aminoacyl-tRNA biosynthesis; selenocysteinyl-tRNA(Sec) biosynthesis; L-seryl-tRNA(Sec) from L-serine and tRNA(Sec): step 1/1. Catalyzes the attachment of serine to tRNA(Ser). Is also able to aminoacylate tRNA(Sec) with serine, to form the misacylated tRNA L-seryl-tRNA(Sec), which will be further converted into selenocysteinyl-tRNA(Sec). This is Serine--tRNA ligase from Pelobacter propionicus (strain DSM 2379 / NBRC 103807 / OttBd1).